Reading from the N-terminus, the 251-residue chain is Pyrroloquinoline-quinone synthase (251 aa).

The protein belongs to the PqqC family.

The enzyme catalyses 6-(2-amino-2-carboxyethyl)-7,8-dioxo-1,2,3,4,7,8-hexahydroquinoline-2,4-dicarboxylate + 3 O2 = pyrroloquinoline quinone + 2 H2O2 + 2 H2O + H(+). The protein operates within cofactor biosynthesis; pyrroloquinoline quinone biosynthesis. In terms of biological role, ring cyclization and eight-electron oxidation of 3a-(2-amino-2-carboxyethyl)-4,5-dioxo-4,5,6,7,8,9-hexahydroquinoline-7,9-dicarboxylic-acid to PQQ. This is Pyrroloquinoline-quinone synthase from Pseudomonas putida (strain GB-1).